Here is a 684-residue protein sequence, read N- to C-terminus: Proprotein convertase subtilisin/kexin type 9 (684 aa).

A signal peptide spans 1–28 (MGTVSSRRLWWPLPLLLLLLLGPPGARA). The propeptide occupies 29–151 (QEDDDGDYEE…IEEDSSVFAQ (123 aa)). Tyr36 is modified (sulfotyrosine). Phosphoserine is present on Ser45. One can recognise an Inhibitor I9 domain in the interval 75 to 148 (TYVVVLKDSD…VDYIEEDSSV (74 aa)). Positions 154 to 460 (PWNLERITPA…GWQLFCRTVW (307 aa)) constitute a Peptidase S8 domain. Catalysis depends on charge relay system residues Asp185 and His225. 2 disulfides stabilise this stretch: Cys222–Cys254 and Cys322–Cys357. The active-site Charge relay system is the Ser385. The C-terminal domain stretch occupies residues 451-684 (GWQLFCRTVW…AICCRSRHLA (234 aa)). Cystine bridges form between Cys456-Cys526, Cys476-Cys525, and Cys485-Cys508. A glycan (N-linked (GlcNAc...) asparagine) is linked at Asn532. Disulfide bonds link Cys533–Cys600, Cys551–Cys599, Cys561–Cys587, Cys607–Cys678, Cys625–Cys677, and Cys634–Cys653.

This sequence belongs to the peptidase S8 family. In terms of assembly, monomer. Can self-associate to form dimers and higher multimers which may have increased LDLR degrading activity. The precursor protein but not the mature protein may form multimers. Interacts with APOB, VLDLR, LRP8/APOER2 and BACE1. The full-length immature form (pro-PCSK9) interacts with SCNN1A, SCNN1B and SCNN1G. The pro-PCSK9 form (via C-terminal domain) interacts with LDLR. Interacts (via the C-terminal domain) with ANXA2 (via repeat Annexin 1); the interaction inhibits the degradation of LDLR. Ca(2+) is required as a cofactor. In terms of processing, cleavage by furin and PCSK5 generates a truncated inactive protein that is unable to induce LDLR degradation. Post-translationally, undergoes autocatalytic cleavage in the endoplasmic reticulum to release the propeptide from the N-terminus and the cleavage of the propeptide is strictly required for its maturation and activation. The cleaved propeptide however remains associated with the catalytic domain through non-covalent interactions, preventing potential substrates from accessing its active site. As a result, it is secreted from cells as a propeptide-containing, enzymatically inactive protein. Phosphorylation protects the propeptide against proteolysis.

It is found in the cytoplasm. Its subcellular location is the secreted. It localises to the endosome. The protein localises to the lysosome. The protein resides in the cell surface. It is found in the endoplasmic reticulum. Its subcellular location is the golgi apparatus. Its activity is regulated as follows. Its proteolytic activity is autoinhibited by the non-covalent binding of the propeptide to the catalytic domain. Inhibited by EGTA. Crucial player in the regulation of plasma cholesterol homeostasis. Binds to low-density lipid receptor family members: low density lipoprotein receptor (LDLR), very low density lipoprotein receptor (VLDLR), apolipoprotein E receptor (LRP1/APOER) and apolipoprotein receptor 2 (LRP8/APOER2), and promotes their degradation in intracellular acidic compartments. Acts via a non-proteolytic mechanism to enhance the degradation of the hepatic LDLR through a clathrin LDLRAP1/ARH-mediated pathway. May prevent the recycling of LDLR from endosomes to the cell surface or direct it to lysosomes for degradation. Can induce ubiquitination of LDLR leading to its subsequent degradation. Inhibits intracellular degradation of APOB via the autophagosome/lysosome pathway in a LDLR-independent manner. Involved in the disposal of non-acetylated intermediates of BACE1 in the early secretory pathway. Inhibits epithelial Na(+) channel (ENaC)-mediated Na(+) absorption by reducing ENaC surface expression primarily by increasing its proteasomal degradation. Regulates neuronal apoptosis via modulation of LRP8/APOER2 levels and related anti-apoptotic signaling pathways. This Plecturocebus moloch (Dusky titi monkey) protein is Proprotein convertase subtilisin/kexin type 9 (PCSK9).